The following is a 592-amino-acid chain: Calnexin (592 aa).

An N-terminal signal peptide occupies residues 1–20 (MEGKWLLCMLLVLGTAIVEA). Topologically, residues 21–481 (HDGHDDDVID…QMIEAAEERP (461 aa)) are lumenal. The Ca(2+) site is built by serine 74 and aspartate 117. Lysine 137 carries the post-translational modification N6-acetyllysine. Residues cysteine 160 and cysteine 194 are joined by a disulfide bond. The an alpha-D-glucoside site is built by tyrosine 164, lysine 166, tyrosine 185, and aspartate 192. The disordered stretch occupies residues 260–345 (GNLLNDMTPP…AEKPEDWDED (86 aa)). The segment covering 274 to 319 (REIEDPEDRKPEDWDERPKIPDPEAVKPDDWDEDAPAKIPDEEATK) has biased composition (basic and acidic residues). The p domain (Extended arm) stretch occupies residues 276-409 (IEDPEDRKPE…RKIPNPDFFE (134 aa)). 5 repeat units span residues 278-290 (DPED…WDER), 295-307 (DPEA…WDED), 314-326 (DEEA…WLDD), 333-345 (DPDA…WDED), and 348-358 (GEWEAPQIANP). 4 X approximate repeats stretches follow at residues 278–345 (DPED…WDED) and 348–405 (GEWE…IPNP). The segment covering 323 to 345 (WLDDEPEYVPDPDAEKPEDWDED) has biased composition (acidic residues). The interval 326-359 (DEPEYVPDPDAEKPEDWDEDMDGEWEAPQIANPK) is interaction with PPIB. The cysteines at positions 360 and 366 are disulfide-linked. Tandem repeats lie at residues 367–377 (GVWQRPMIDNP), 381–391 (GKWKPPMIDNP), and 395–405 (GIWKPRKIPNP). Glutamate 425 serves as a coordination point for an alpha-D-glucoside. Residue aspartate 436 coordinates Ca(2+). The chain crosses the membrane as a helical span at residues 482-502 (WLWVVYILTVALPVFLVILFC). Residues cysteine 502 and cysteine 503 are each lipidated (S-palmitoyl cysteine). At 503-592 (CSGKKQTSAM…SPRNRKPRRE (90 aa)) the chain is on the cytoplasmic side. Residues 503 to 592 (CSGKKQTSAM…SPRNRKPRRE (90 aa)) form a sufficient to mediate interaction with SGIP1 region. Residues 511–592 (AMEYKKTDAP…SPRNRKPRRE (82 aa)) form a disordered region. Residues 525–547 (KEEEEEKEEEKDKGDEEEEGEEK) are compositionally biased toward acidic residues. Serine 554 bears the Phosphoserine mark. Residue threonine 562 is modified to Phosphothreonine. At serine 564 the chain carries Phosphoserine; by MAPK3. Serine 583 bears the Phosphoserine mark.

This sequence belongs to the calreticulin family. As to quaternary structure, interacts with MAPK3/ERK1. Interacts with KCNH2. Associates with ribosomes. Interacts with SGIP1; involved in negative regulation of endocytosis. The palmitoylated form interacts with the ribosome-translocon complex component SSR1, promoting efficient folding of glycoproteins. Interacts with SERPINA2P/SERPINA2 and with the S and Z variants of SERPINA1. Interacts with PPIB. Interacts with ZNRF4. Interacts with SMIM22. Interacts with TMX2. Interacts with TMEM35A/NACHO and CHRNA7. Interacts with reticulophagy regulators RETREG2 and RETREG3. Interacts with DNM1L; may form part of a larger protein complex at the ER-mitochondrial interface during mitochondrial fission. Interacts with ADAM7. In terms of processing, phosphorylated at Ser-564 by MAPK3/ERK1. Phosphorylation by MAPK3/ERK1 increases its association with ribosomes. Post-translationally, palmitoylation by DHHC6 leads to the preferential localization to the perinuclear rough ER. It mediates the association of calnexin with the ribosome-translocon complex (RTC) which is required for efficient folding of glycosylated proteins. Ubiquitinated, leading to proteasomal degradation. Probably ubiquitinated by ZNRF4.

The protein localises to the endoplasmic reticulum membrane. Its subcellular location is the mitochondrion membrane. It is found in the melanosome membrane. Functionally, calcium-binding protein that interacts with newly synthesized monoglucosylated glycoproteins in the endoplasmic reticulum. It may act in assisting protein assembly and/or in the retention within the ER of unassembled protein subunits. It seems to play a major role in the quality control apparatus of the ER by the retention of incorrectly folded proteins. Associated with partial T-cell antigen receptor complexes that escape the ER of immature thymocytes, it may function as a signaling complex regulating thymocyte maturation. Additionally it may play a role in receptor-mediated endocytosis at the synapse. The chain is Calnexin (CANX) from Pongo abelii (Sumatran orangutan).